A 403-amino-acid polypeptide reads, in one-letter code: Formin-like protein 21b (403 aa).

The 380-residue stretch at 1–380 (MELLFTATLL…KAAKEAEMEK (380 aa)) folds into the FH2 domain. The segment at 373-403 (AKEAEMEKTKKRVSLTNKKASGVGEEESCLI) is disordered.

It belongs to the formin-like family. Class-II subfamily.

This chain is Formin-like protein 21b (FH21B), found in Arabidopsis thaliana (Mouse-ear cress).